The primary structure comprises 924 residues: MLEPRGADIPILFLVLVVLPVVAYILLGKWSNISEKRVRANLLAQMAAEEALRAETVVNADRGVRFESVATENRAQRTRTKTVSAGGGAVRAEFDAGARETVAEQRSDSVTATCGVTVVAPVNNNELHVCARCFGPAKTRCSRCKSVRYCSGKCQIIHWRVAHKDECVPVESCSSSSERVSFEKDSVLYDHGMDSTMYSNNTTQAAKGKTSKSSVDFASLGISQNDITPQINTQGRKSVGKQHSSKANRESCRRDSATVFDSSDEAASAGGDNKTSHIKHKSRGNSYAAETNPRRHSVDSSAVQMNGQSFVSGMQESHKHENNLGVRSSFGCPNTQYPSNGTRTATLPRTGINKSGEQSCTETSKKGQVAAVSKTVRSKDTGISEESNGISSTMGIMKMMGLRNSTKHDDRYKNLKMLFPYEEFLKFFQCEVFDLSPRGLVNCGNSCYANAVLQSLTCTKPLVAYLLRRSHSRSCSGKDWCLMCELEQHVMMLRESGGPLSASRILSHMRSINCQIGDGSQEDAHEFLRLLVASMQSICLERLGGETKVDPRLQETTLVQHMFGGRLRSKVKCLRCDHESERYENIMDLTLEIYGWVESLQDALTQFTRPEDLDGENMYRCSRCAGYVRARKELSIHEAPNILTIVLKRFQEGRYGKINKCISFPEMLDMIPFMTRTGDVPPLYMLYAVIVHLDTLNASFSGHYISYVKDLRGNWYRIDDSEIHPVPMTQVMSEGAYMLFYMRSYPRPQRGEHNGKAPVHHSQPRNEMKEQRKPVNRFKPRADHKNTESSSSEWSLFTSSDEASFTTESTRDSFSTIDYTDVCHVVDSSSPFAIFNNVYHNVEPSPHNTVACRMFSGTKPETRYFVEQETNHNNTVVLDATPSLYPIPAPYPPHDYYDQSMYVNYETNPEFNNGQDQDRTYSYW.

Zn(2+) contacts are provided by Cys130, Cys133, Cys141, Cys144, Cys150, Cys154, His163, and Cys167. The MYND-type zinc finger occupies Cys130 to Cys167. Positions Asp226–Arg236 are enriched in polar residues. 2 disordered regions span residues Asp226–Ser301 and Ser317–Lys366. The span at Ala247 to Ser256 shows a compositional bias: basic and acidic residues. Over residues Gly331–Glu362 the composition is skewed to polar residues. The USP domain occupies Arg438 to Ser744. Cys447 (nucleophile) is an active-site residue. The Proton acceptor role is filled by His703. The disordered stretch occupies residues Arg750–Glu793. Residues Pro764–Lys773 show a composition bias toward basic and acidic residues.

Belongs to the peptidase C19 family. Interacts with DA1. Highly expressed in rosette leaves and inflorescence. Expressed at low levels in cotyledons, stems, cauline leaves and siliques.

The protein resides in the cytoplasm. Its subcellular location is the nucleus. It catalyses the reaction Thiol-dependent hydrolysis of ester, thioester, amide, peptide and isopeptide bonds formed by the C-terminal Gly of ubiquitin (a 76-residue protein attached to proteins as an intracellular targeting signal).. In terms of biological role, recognizes and hydrolyzes the peptide bond at the C-terminal Gly of ubiquitin. Involved in the processing of poly-ubiquitin precursors as well as that of ubiquitinated proteins. Involved in the regulation of organ size. Acts as a positive regulator of cell proliferation. Possesses deubiquitinating enzyme activity in vitro. The enzyme activity of UBP15 is required for its function in regulation of cell proliferation. Functions antagonistically in a common pathway with DA1 to regulate seed size. Acts maternally to regulate seed size by promoting cell proliferation in the integuments of ovules and developing seeds. Functions independently of DA2 and BB. The chain is Ubiquitin carboxyl-terminal hydrolase 15 from Arabidopsis thaliana (Mouse-ear cress).